A 208-amino-acid chain; its full sequence is dITP/XTP pyrophosphatase (208 aa).

11 to 16 (SRNWKK) is a binding site for substrate. The Proton acceptor role is filled by Asp-76. Asp-76 contributes to the Mg(2+) binding site. Residues Ser-77, 158–161 (FGYD), Lys-184, and 189–190 (HR) contribute to the substrate site.

This sequence belongs to the HAM1 NTPase family. As to quaternary structure, homodimer. It depends on Mg(2+) as a cofactor.

The enzyme catalyses XTP + H2O = XMP + diphosphate + H(+). It carries out the reaction dITP + H2O = dIMP + diphosphate + H(+). It catalyses the reaction ITP + H2O = IMP + diphosphate + H(+). Its function is as follows. Pyrophosphatase that catalyzes the hydrolysis of nucleoside triphosphates to their monophosphate derivatives, with a high preference for the non-canonical purine nucleotides XTP (xanthosine triphosphate), dITP (deoxyinosine triphosphate) and ITP. Seems to function as a house-cleaning enzyme that removes non-canonical purine nucleotides from the nucleotide pool, thus preventing their incorporation into DNA/RNA and avoiding chromosomal lesions. The chain is dITP/XTP pyrophosphatase from Mycobacterium leprae (strain TN).